A 396-amino-acid chain; its full sequence is Formate-dependent phosphoribosylglycinamide formyltransferase (396 aa).

Residues 25 to 26 and glutamate 85 contribute to the N(1)-(5-phospho-beta-D-ribosyl)glycinamide site; that span reads EL. Residues arginine 117, lysine 158, 163 to 168, 198 to 201, and glutamate 206 contribute to the ATP site; these read SSGKGQ and EAFI. An ATP-grasp domain is found at 122–311; it reads RLAAETLAIP…EFALHVRAIL (190 aa). Mg(2+)-binding residues include glutamate 270 and glutamate 282. Residues aspartate 289, lysine 359, and 366–367 contribute to the N(1)-(5-phospho-beta-D-ribosyl)glycinamide site; that span reads RR.

It belongs to the PurK/PurT family. Homodimer.

It catalyses the reaction N(1)-(5-phospho-beta-D-ribosyl)glycinamide + formate + ATP = N(2)-formyl-N(1)-(5-phospho-beta-D-ribosyl)glycinamide + ADP + phosphate + H(+). The protein operates within purine metabolism; IMP biosynthesis via de novo pathway; N(2)-formyl-N(1)-(5-phospho-D-ribosyl)glycinamide from N(1)-(5-phospho-D-ribosyl)glycinamide (formate route): step 1/1. Involved in the de novo purine biosynthesis. Catalyzes the transfer of formate to 5-phospho-ribosyl-glycinamide (GAR), producing 5-phospho-ribosyl-N-formylglycinamide (FGAR). Formate is provided by PurU via hydrolysis of 10-formyl-tetrahydrofolate. The sequence is that of Formate-dependent phosphoribosylglycinamide formyltransferase from Shewanella frigidimarina (strain NCIMB 400).